A 362-amino-acid polypeptide reads, in one-letter code: Phosphoserine aminotransferase (362 aa).

Ser9 and Arg42 together coordinate L-glutamate. Pyridoxal 5'-phosphate-binding positions include 76 to 77, Trp102, Thr153, Asp174, and Gln197; that span reads GR. At Lys198 the chain carries N6-(pyridoxal phosphate)lysine. 239–240 is a binding site for pyridoxal 5'-phosphate; it reads NT.

The protein belongs to the class-V pyridoxal-phosphate-dependent aminotransferase family. SerC subfamily. In terms of assembly, homodimer. The cofactor is pyridoxal 5'-phosphate.

It localises to the cytoplasm. It catalyses the reaction O-phospho-L-serine + 2-oxoglutarate = 3-phosphooxypyruvate + L-glutamate. The enzyme catalyses 4-(phosphooxy)-L-threonine + 2-oxoglutarate = (R)-3-hydroxy-2-oxo-4-phosphooxybutanoate + L-glutamate. It participates in amino-acid biosynthesis; L-serine biosynthesis; L-serine from 3-phospho-D-glycerate: step 2/3. It functions in the pathway cofactor biosynthesis; pyridoxine 5'-phosphate biosynthesis; pyridoxine 5'-phosphate from D-erythrose 4-phosphate: step 3/5. In terms of biological role, catalyzes the reversible conversion of 3-phosphohydroxypyruvate to phosphoserine and of 3-hydroxy-2-oxo-4-phosphonooxybutanoate to phosphohydroxythreonine. This chain is Phosphoserine aminotransferase, found in Escherichia coli O7:K1 (strain IAI39 / ExPEC).